Consider the following 145-residue polypeptide: Aegerolysin Aa-Pri1 (145 aa).

A propeptide spanning residues 1-8 (MDSNKDER) is cleaved from the precursor.

Belongs to the aegerolysin family.

This Cyclocybe aegerita (Black poplar mushroom) protein is Aegerolysin Aa-Pri1 (AA-PRI1).